The following is a 122-amino-acid chain: Venom protein 7.1 (122 aa).

The first 19 residues, 1–19, serve as a signal peptide directing secretion; the sequence is MRFSIISASLVLIFANVKA.

In terms of processing, contains 3 disulfide bonds. In terms of tissue distribution, expressed by the venom gland.

It localises to the secreted. The sequence is that of Venom protein 7.1 from Lychas mucronatus (Chinese swimming scorpion).